Here is a 674-residue protein sequence, read N- to C-terminus: Probable copper-transporting P-type ATPase B (674 aa).

Positions Met-1–Ala-22 are disordered. Positions Met-7–Asn-16 are enriched in basic and acidic residues. A run of 6 helical transmembrane segments spans residues Phe-32–Asn-52, Phe-57–Gly-77, Gly-95–Phe-115, Thr-127–Ile-147, Gly-284–Ile-304, and Leu-315–Thr-335. The active-site 4-aspartylphosphate intermediate is the Asp-367. The Mg(2+) site is built by Asp-565 and Asp-569. The next 2 helical transmembrane spans lie at Leu-623–Gly-645 and Ser-649–Leu-671.

This sequence belongs to the cation transport ATPase (P-type) (TC 3.A.3) family. Type IB subfamily.

It is found in the cell membrane. It carries out the reaction Cu(+)(in) + ATP + H2O = Cu(+)(out) + ADP + phosphate + H(+). Involved in copper transport. The chain is Probable copper-transporting P-type ATPase B (copB) from Staphylococcus epidermidis (strain ATCC 35984 / DSM 28319 / BCRC 17069 / CCUG 31568 / BM 3577 / RP62A).